Reading from the N-terminus, the 1378-residue chain is MAQSFLGQKRLRKYYGKIREVLDMPNLIEVQKSSYDLFLNSGEAEVPTDGEGIAGVFQSVFPIKDFNETSVLEYVKYELEKPKYDVEECQQRDMTYSAPLKVTLRLIVFDVDEDTGAKSVKDIKEQDVFMGDMPLMTPNGTFVVNGTERVIVSQMHRSPGVFFDHDKGKTHSSGKLLFACRIIPYRGSWLDFEFDAKDIVFARIDRRRKLPVTTLLYSLGLDQEAIMDAYYDTITYKLEKNKGWVAPFFPDRVRGTRPTYDLVDAASGEVLFERGKKVTPRAVKKLIDEGKVTELLLPYEHIAGKFVAKDIINEETGAIYVEAGDELTLEYDKDGTLIGGTAKELVDAGITEIPVLDIDNVNVGPYMRNTMAQDKNMNRDTALMDIYRVMRPGEPPTVEAASALFDTLFFDAERYDLSAVGRVKMNMRLALDAEDTQRTLRREDIVACIKALVDLRDGRGDIDDIDHLGNRRVRSVGELMENQYRVGLLRMERAIKERMSSVEIDTVMPQDLINAKPAAAAVREFFGSSQLSQFMDQTNPLSEVTHKRRLSALGPGGLTRERAGFEVRDVHPTHYGRMCPIETPEGPNIGLINSLATFARVNKYGFIETPYRKVENRMVTDEVQYMSATEEMRHTVAQANAQLDEDGRFKNDLVSTRQSGDYTLAPSENVDLIDVSPKQLVSVAASLIPFLENDDANRALMGSNMQRQAVPLLQAEAPLVGTGIEEVVARDSGAAIMAKRAGIIDQVDAQRIVIRATSDLELGDAGVDIYRMRKFQRSNQNTCINQRPLVKVGDTVLKGQVIADGPSTDMGELALGKNVVVAFMPWNGYNYEDSILISERIARDDVFTSIHIEEFEVAARDTKLGPEEITRDIPNVGEEALRNLDEAGIVYIGADVEPGDILVGKITPKGESPMTPEEKLLRAIFGEKASDVRDTSLRVKPGDFGTVVEVRVFNRHGVEKDERALQIEREEVERLARDRDDEMAILDRNIYARLKSTILGKVAVKGPKGVSANAEITEDLLQMLPRVQWWQLALKDEGDAQVVEALNEQYEIQKRTLDARFEDKVEKVRRGDDLPPGVMKMVKVFVAVKRKLQPGDKMAGRHGNKGVISKVVPMEDMPFLADGTPVDFCLNPLGVPSRMNVGQILETHMGWAARGLGLNVDEALQEYRRSGDLTPVRDALSHAYGENVYDEGIAGMDEETLIEAAGNVTRGVPIATPVFDGAKEGDVNDALVRAGFSESGQSILFDGRTGEQFARPVTVGVKYLLKLHHLVDDKIHARSTGPYSLVTQQPLGGKAQFGGQRFGEMEVWALEAYGAAYTLQEMLTVKSDDVAGRTKVYESIVKGEDNFEAGVPESFNVLVKEVRGLGLNMELLDAEEDE.

Belongs to the RNA polymerase beta chain family. In terms of assembly, the RNAP catalytic core consists of 2 alpha, 1 beta, 1 beta' and 1 omega subunit. When a sigma factor is associated with the core the holoenzyme is formed, which can initiate transcription.

It catalyses the reaction RNA(n) + a ribonucleoside 5'-triphosphate = RNA(n+1) + diphosphate. Its function is as follows. DNA-dependent RNA polymerase catalyzes the transcription of DNA into RNA using the four ribonucleoside triphosphates as substrates. This Roseobacter denitrificans (strain ATCC 33942 / OCh 114) (Erythrobacter sp. (strain OCh 114)) protein is DNA-directed RNA polymerase subunit beta.